The primary structure comprises 433 residues: Arrestin domain-containing protein 1 (433 aa).

2 disordered regions span residues 296 to 322 and 349 to 372; these read GLGLPPGAPPLVVPSAPPQEEAEAEAA and LSSVPGAPEPCPQDGSPASHPLHP. The segment covering 301-312 has biased composition (pro residues); the sequence is PGAPPLVVPSAP. Short sequence motifs (PPxY motif) lie at residues 402–405 and 415–418; these read PPEY and PPSY.

This sequence belongs to the arrestin family. In terms of assembly, interacts (via PPxY motifs) with ITCH (via WW domains); the interaction is direct and participates in the recruitment of the ubiquitin-protein ligase ITCH to the NOTCH1 receptor. Interacts with ARRB1 and ARRB2; the interaction is direct. Interacts with TSG101; may recruit TSG101 to the plasma membrane. Interacts (via PPxY motifs) with WWP2 (via WW domains); ubiquitinates ARRDC1. Interacts with SLC11A2; controls the incorporation of SLC11A2 into extracellular vesicles through an ubiquitination-dependent mechanism. Interacts with WWP1 (via WW domains). Interacts with NEDD4 (via WW domains). Interacts with PDCD6IP. Post-translationally, ubiquitinated. Ubiquitination by WWP2; promotes localization to extracellular microvesicles. Ubiquitinated by WWP1.

The protein localises to the cell membrane. In terms of biological role, functions as an adapter recruiting ubiquitin-protein ligases to their specific substrates. Through an ubiquitination-dependent mechanism plays for instance a role in the incorporation of SLC11A2 into extracellular vesicles. More generally, plays a role in the extracellular transport of proteins between cells through the release in the extracellular space of microvesicles. By participating in the ITCH-mediated ubiquitination and subsequent degradation of NOTCH1, negatively regulates the NOTCH signaling pathway. In Homo sapiens (Human), this protein is Arrestin domain-containing protein 1.